The primary structure comprises 227 residues: Glutathione S-transferase U7 (227 aa).

A GST N-terminal domain is found at Glu-8 to Pro-87. Glutathione contacts are provided by residues Ser-18 to Pro-19, Asn-44 to Lys-45, Met-58 to Ile-59, and Glu-71 to Ser-72. The GST C-terminal domain maps to Asp-92–Ile-215.

This sequence belongs to the GST superfamily. Tau family.

The protein resides in the cytoplasm. The protein localises to the cytosol. The catalysed reaction is RX + glutathione = an S-substituted glutathione + a halide anion + H(+). Its function is as follows. May be involved in the conjugation of reduced glutathione to a wide number of exogenous and endogenous hydrophobic electrophiles and have a detoxification role against certain herbicides. The polypeptide is Glutathione S-transferase U7 (GSTU7) (Arabidopsis thaliana (Mouse-ear cress)).